The chain runs to 295 residues: tRNA dimethylallyltransferase (295 aa).

An ATP-binding site is contributed by 9 to 16 (GATATGKS). A substrate-binding site is contributed by 11–16 (TATGKS). Residues 34-37 (DSRQ) form an interaction with substrate tRNA region.

Belongs to the IPP transferase family. In terms of assembly, monomer. Requires Mg(2+) as cofactor.

The catalysed reaction is adenosine(37) in tRNA + dimethylallyl diphosphate = N(6)-dimethylallyladenosine(37) in tRNA + diphosphate. Catalyzes the transfer of a dimethylallyl group onto the adenine at position 37 in tRNAs that read codons beginning with uridine, leading to the formation of N6-(dimethylallyl)adenosine (i(6)A). This chain is tRNA dimethylallyltransferase, found in Nostoc sp. (strain PCC 7120 / SAG 25.82 / UTEX 2576).